The chain runs to 723 residues: ATP-dependent DNA helicase RRM3 (723 aa).

Disordered regions lie at residues 1–31 (MFRSHASGNKKQWSKRSSNGSTPAASASGSH) and 61–101 (DLES…DDDP). Serine 64 carries the post-translational modification Phosphoserine. A compositionally biased stretch (low complexity) spans 83–96 (NNSSSLFSQSQGSF). 254–261 (GSAGTGKS) serves as a coordination point for ATP. The DNA-binding element occupies 682 to 701 (QVYVALSRAVTMDTLQVLNF).

Belongs to the helicase family. In terms of assembly, interacts with DEF1 and POL30.

It localises to the nucleus. The protein localises to the chromosome. It is found in the telomere. It carries out the reaction Couples ATP hydrolysis with the unwinding of duplex DNA at the replication fork by translocating in the 5'-3' direction. This creates two antiparallel DNA single strands (ssDNA). The leading ssDNA polymer is the template for DNA polymerase III holoenzyme which synthesizes a continuous strand.. It catalyses the reaction ATP + H2O = ADP + phosphate + H(+). Functionally, 5' to 3' DNA replicative helicase recruited to paused replisomes to promote fork progression throughout nonhistone protein-DNA complexes, naturally occurring impediments that are encountered in each S phase where replication forks pauses. Needed for normal fork progression through over 1000 discrete sites scattered throughout the genome, like rDNA, tRNA genes, centromeres, active replication origins, or transcriptional silencers. Required for timely replication of the telomere and subtelomeric DNA and for wild-type levels of telomeric silencing. Involved in regulation of Ty1 transposition and protects the genome from instability at nascent sites of retrotransposition. Involved in DNA repair during stalled replication fork, regulation of fragile sites expression and essential for genome stability. Also plays a role in mtDNA replication. Has G-quadruplex (G4) unwinding activity and can suppress G4-induced genome instability when PIF1 levels are low. This chain is ATP-dependent DNA helicase RRM3, found in Saccharomyces cerevisiae (strain ATCC 204508 / S288c) (Baker's yeast).